The following is a 334-amino-acid chain: Eukaryotic translation initiation factor 3 subunit H (334 aa).

Residues V20 to A152 form the MPN domain.

Belongs to the eIF-3 subunit H family. As to quaternary structure, component of the eukaryotic translation initiation factor 3 (eIF-3) complex.

It localises to the cytoplasm. Functionally, component of the eukaryotic translation initiation factor 3 (eIF-3) complex, which is involved in protein synthesis of a specialized repertoire of mRNAs and, together with other initiation factors, stimulates binding of mRNA and methionyl-tRNAi to the 40S ribosome. The eIF-3 complex specifically targets and initiates translation of a subset of mRNAs involved in cell proliferation. The chain is Eukaryotic translation initiation factor 3 subunit H from Anopheles gambiae (African malaria mosquito).